Consider the following 370-residue polypeptide: Subtilisin-like protease (370 aa).

The N-terminal stretch at 1–17 (MIASIVFFIVLVDGVAT) is a signal peptide. Active-site charge relay system residues include aspartate 13, histidine 35, and serine 190. The Peptidase S8 domain maps to 18 to 261 (GSPNALVTDF…FGEVSPSRLE (244 aa)). The P/Homo B domain maps to 240 to 370 (RVTDRWTHRN…TTEGTCHGIR (131 aa)).

It belongs to the peptidase S8 family.

This chain is Subtilisin-like protease (ORF47), found in Ictalurid herpesvirus 1 (strain Auburn) (IcHV-1).